Consider the following 199-residue polypeptide: Elongation factor Ts (199 aa).

The interval 82–85 (TDFV) is involved in Mg(2+) ion dislocation from EF-Tu.

The protein belongs to the EF-Ts family.

The protein resides in the cytoplasm. Associates with the EF-Tu.GDP complex and induces the exchange of GDP to GTP. It remains bound to the aminoacyl-tRNA.EF-Tu.GTP complex up to the GTP hydrolysis stage on the ribosome. The chain is Elongation factor Ts from Leptospira interrogans serogroup Icterohaemorrhagiae serovar copenhageni (strain Fiocruz L1-130).